The chain runs to 376 residues: 23S rRNA (uracil(747)-C(5))-methyltransferase RlmC (376 aa).

The [4Fe-4S] cluster site is built by Cys3, Cys11, Cys14, and Cys88. Positions 213, 242, 263, and 308 each coordinate S-adenosyl-L-methionine. Catalysis depends on Cys335, which acts as the Nucleophile.

Belongs to the class I-like SAM-binding methyltransferase superfamily. RNA M5U methyltransferase family. RlmC subfamily.

The enzyme catalyses uridine(747) in 23S rRNA + S-adenosyl-L-methionine = 5-methyluridine(747) in 23S rRNA + S-adenosyl-L-homocysteine + H(+). Catalyzes the formation of 5-methyl-uridine at position 747 (m5U747) in 23S rRNA. This Vibrio vulnificus (strain CMCP6) protein is 23S rRNA (uracil(747)-C(5))-methyltransferase RlmC.